The sequence spans 457 residues: Tryptophan aminotransferase-related protein 3 (457 aa).

A helical membrane pass occupies residues 6-26; the sequence is LLIAGSIILNLVFTIHILYNN. Residues Tyr123, 163–164, Asn237, 257–260, 280–283, and Arg291 each bind pyridoxal 5'-phosphate; these read AT, DYAY, and SLSK. N6-(pyridoxal phosphate)lysine is present on Lys283.

The protein belongs to the alliinase family. Requires pyridoxal 5'-phosphate as cofactor.

Its subcellular location is the membrane. Probable aminotransferase. The chain is Tryptophan aminotransferase-related protein 3 (TAR3) from Arabidopsis thaliana (Mouse-ear cress).